The sequence spans 595 residues: Putative capsid protein V20 (595 aa).

Its subcellular location is the virion. In terms of biological role, may self assemble to form an icosahedral capsid. Most abundant protein in the virion. This is Putative capsid protein V20 from Sputnik virophage.